The sequence spans 365 residues: Putative F-box protein At1g31000 (365 aa).

Positions 15–62 constitute an F-box domain; that stretch reads NDSDSVRIDIVIEIVKRLPLKDVSRFLLVSKLWSEIIRSPYFIRSFPF.

The sequence is that of Putative F-box protein At1g31000 from Arabidopsis thaliana (Mouse-ear cress).